Here is a 374-residue protein sequence, read N- to C-terminus: 4-galactosyl-N-acetylglucosaminide 3-alpha-L-fucosyltransferase FUT5 (374 aa).

The Cytoplasmic segment spans residues 1–15 (MDPLGPAKPQWLWRR). A helical; Signal-anchor for type II membrane protein membrane pass occupies residues 16–34 (CLAGLLFQLLVAVCFFSYL). Topologically, residues 35-374 (RVSQDHATGS…TVRSIAAWFT (340 aa)) are lumenal. Asn60, Asn105, Asn167, and Asn198 each carry an N-linked (GlcNAc...) asparagine glycan.

Belongs to the glycosyltransferase 10 family.

It localises to the golgi apparatus. The protein localises to the golgi stack membrane. It carries out the reaction a beta-D-galactosyl-(1-&gt;3)-N-acetyl-beta-D-glucosaminyl derivative + GDP-beta-L-fucose = a beta-D-galactosyl-(1-&gt;3)-[alpha-L-fucosyl-(1-&gt;4)]-N-acetyl-beta-D-glucosaminyl derivative + GDP + H(+). The enzyme catalyses an N-acetyl-alpha-neuraminyl-(2-&gt;3)-beta-D-galactosyl-(1-&gt;4)-N-acetyl-beta-D-glucosaminyl derivative + GDP-beta-L-fucose = an alpha-Neu5Ac-(2-&gt;3)-beta-D-Gal-(1-&gt;4)-[alpha-L-Fuc-(1-&gt;3)]-beta-D-GlcNAc derivative + GDP + H(+). It catalyses the reaction an alpha-Neu5Ac-(2-&gt;3)-beta-D-Gal-(1-&gt;4)-beta-D-GlcNAc-(1-&gt;3)-beta-D-Gal-(1-&gt;4)-[alpha-L-Fuc-(1-&gt;3)]-beta-D-GlcNAc derivative + GDP-beta-L-fucose = an alpha-Neu5Ac-(2-&gt;3)-beta-D-Gal-(1-&gt;4)-[alpha-L-Fuc-(1-&gt;3)]-beta-D-GlcNAc-(1-&gt;3)-beta-D-Gal-(1-&gt;4)-[alpha-L-Fuc-(1-&gt;3)]-beta-D-GlcNAc derivative + GDP + H(+). The catalysed reaction is a beta-D-galactosyl-(1-&gt;4)-N-acetyl-beta-D-glucosaminyl derivative + GDP-beta-L-fucose = a beta-D-galactosyl-(1-&gt;4)-[alpha-L-fucosyl-(1-&gt;3)]-N-acetyl-beta-D-glucosaminyl derivative + GDP + H(+). It carries out the reaction a neolactoside nLc4Cer + GDP-beta-L-fucose = a neolactoside III(3)-alpha-Fuc-nLc4Cer + GDP + H(+). The enzyme catalyses a neolactoside nLc6Cer + GDP-beta-L-fucose = beta-D-galactosyl-(1-&gt;4)-N-acetyl-beta-D-glucosaminyl-(1-&gt;3)-beta-D-galactosyl-(1-&gt;4)-[alpha-L-fucosyl-(1-&gt;3)]-N-acetyl-beta-D-glucosaminyl-(1-&gt;3)-beta-D-galactosyl-(1-&gt;4)-beta-D-glucosyl-(1&lt;-&gt;1')-ceramide + GDP + H(+). It catalyses the reaction a neolactoside nLc6Cer(d18:1(4E)) + GDP-beta-L-fucose = a neolactoside III(3)-alpha-Fuc-nLc6Cer(d18:1(4E)) + GDP + H(+). The catalysed reaction is a neolactoside nLc4Cer(d18:1(4E)) + GDP-beta-L-fucose = a neolactoside III(3)-alpha-Fuc-nLc4Cer(d18:1(4E)) + GDP + H(+). It carries out the reaction a neolactoside VI(3)-alpha-NeuNAc-nLc6Cer + GDP-beta-L-fucose = a neolactoside VI(3)-alpha-NeuAc,III(3)-alphaFuc-nLc6Cer + GDP + H(+). The enzyme catalyses beta-D-galactosyl-(1-&gt;4)-N-acetyl-D-glucosamine + GDP-beta-L-fucose = beta-D-galactosyl-(1-&gt;4)-[alpha-L-fucosyl-(1-&gt;3)]-N-acetyl-D-glucosamine + GDP + H(+). It catalyses the reaction N-acetyl-alpha-neuraminosyl-(2-&gt;3)-beta-D-galactosyl-(1-&gt;4)-N-acetyl-beta-D-glucosamine + GDP-beta-L-fucose = N-acetyl-alpha-neuraminosyl-(2-&gt;3)-beta-D-galactosyl-(1-&gt;4)-[alpha-L-fucosyl-(1-&gt;3)]-N-acetyl-beta-D-glucosamine + GDP + H(+). The catalysed reaction is alpha-L-Fuc-(1-&gt;2)-beta-D-Gal-(1-&gt;4)-D-GlcNAc + GDP-beta-L-fucose = alpha-L-Fuc-(1-&gt;2)-beta-D-Gal-(1-&gt;4)-[alpha-L-Fuc-(1-&gt;3)]-D-GlcNAc + GDP + H(+). It carries out the reaction an alpha-Neu5Ac-(2-&gt;3)-beta-D-Gal-(1-&gt;3)-D-GlcNAc derivative + GDP-beta-L-fucose = an alpha-Neu5Ac-(2-&gt;3)-beta-D-Gal-(1-&gt;3)-[alpha-L-Fuc-(1-&gt;4)]-beta-D-GlcNAc derivative + GDP + H(+). The protein operates within protein modification; protein glycosylation. Its function is as follows. Catalyzes preferentially the transfer of L-fucose, from a guanosine diphosphate-beta-L-fucose, to the N-acetyl-beta-D-glucosamine (GlcNAc) of an N-acetyllactosamine unit (type 2 chain) of an oligosaccharide, or a glycoprotein- and a glycolipid-linked N-acetyllactosamine unit via an alpha (1,3) linkage and participates in the surface expression of VIM-2, Lewis X/SSEA-1 and sialyl Lewis X antigens. Preferentially transfers fucose to the GlcNAc of an internal N-acetyllactosamine unit of a poly-N-acetyllactosamine chain acceptor substrate. Also catalyzes to a lesser extend the transfer of L-fucose to the GlcNAc of a type 1 (beta-D-galactosyl-(1-&gt;3)-N-acetyl-beta-D-glucosaminyl) or H-type 1 (alpha-L-Fuc-(1-&gt;2)-beta-D-Gal-(1-&gt;3)-D-GlcNAc) chain oligosaccharide via an alpha (1,4) linkage. Preferentially catalyzes sialylated type 2 oligosaccharide acceptors over neutral type 2 or H type 2 (alpha-L-Fuc-(1-&gt;2)-beta-D-Gal-(1-&gt;4)-D-GlcNAc) oligosaccharide acceptors. Lactose-based structures are also acceptor substrates. The polypeptide is 4-galactosyl-N-acetylglucosaminide 3-alpha-L-fucosyltransferase FUT5 (Gorilla gorilla gorilla (Western lowland gorilla)).